Consider the following 298-residue polypeptide: (S)-ureidoglycine aminohydrolase (298 aa).

The N-terminal stretch at 1-20 (MRSLYLIVFIVISLVKASKS) is a signal peptide. The 67-residue stretch at 222–288 (TMDFQPGEFL…ALGKTRSRYL (67 aa)) folds into the Cupin type-2 domain. Residues Glu-235, His-237, His-241, and Gln-275 each coordinate Mn(2+). Residue Glu-235 participates in substrate binding. Positions 275, 287, and 291 each coordinate substrate.

Belongs to the UGHY family. Homooctamer. The cofactor is Mn(2+).

Its subcellular location is the endoplasmic reticulum. The catalysed reaction is (S)-2-ureidoglycine + H2O = (S)-ureidoglycolate + NH4(+). Functionally, involved in the catabolism of purine nucleotides. Can use (S)-2-ureidoglycine as substrate, but not allantoate. The sequential activity of AAH, UGLYAH and UAH allows a complete purine breakdown without the intermediate generation of urea. This Arabidopsis thaliana (Mouse-ear cress) protein is (S)-ureidoglycine aminohydrolase (UGLYAH).